Reading from the N-terminus, the 117-residue chain is uncharacterized protein (117 aa).

The protein localises to the mitochondrion. This is an uncharacterized protein from Arabidopsis thaliana (Mouse-ear cress).